An 86-amino-acid chain; its full sequence is Small ribosomal subunit protein bS20 (86 aa).

Belongs to the bacterial ribosomal protein bS20 family.

In terms of biological role, binds directly to 16S ribosomal RNA. The protein is Small ribosomal subunit protein bS20 of Rhodococcus opacus (strain B4).